Consider the following 158-residue polypeptide: 2-C-methyl-D-erythritol 2,4-cyclodiphosphate synthase (158 aa).

D8 and H10 together coordinate a divalent metal cation. Residues 8–10 (DVH) and 34–35 (HS) each bind 4-CDP-2-C-methyl-D-erythritol 2-phosphate. Residue H42 coordinates a divalent metal cation. Residues 56 to 58 (DIG), 61 to 65 (FPDTD), 100 to 106 (AQKPKML), 132 to 135 (TTEE), and F139 contribute to the 4-CDP-2-C-methyl-D-erythritol 2-phosphate site.

The protein belongs to the IspF family. Homotrimer. It depends on a divalent metal cation as a cofactor.

It catalyses the reaction 4-CDP-2-C-methyl-D-erythritol 2-phosphate = 2-C-methyl-D-erythritol 2,4-cyclic diphosphate + CMP. Its pathway is isoprenoid biosynthesis; isopentenyl diphosphate biosynthesis via DXP pathway; isopentenyl diphosphate from 1-deoxy-D-xylulose 5-phosphate: step 4/6. In terms of biological role, involved in the biosynthesis of isopentenyl diphosphate (IPP) and dimethylallyl diphosphate (DMAPP), two major building blocks of isoprenoid compounds. Catalyzes the conversion of 4-diphosphocytidyl-2-C-methyl-D-erythritol 2-phosphate (CDP-ME2P) to 2-C-methyl-D-erythritol 2,4-cyclodiphosphate (ME-CPP) with a corresponding release of cytidine 5-monophosphate (CMP). This chain is 2-C-methyl-D-erythritol 2,4-cyclodiphosphate synthase, found in Clostridium beijerinckii (strain ATCC 51743 / NCIMB 8052) (Clostridium acetobutylicum).